A 935-amino-acid polypeptide reads, in one-letter code: Potassium channel AKT1 (935 aa).

Residues 1 to 106 lie on the Cytoplasmic side of the membrane; the sequence is MARWGAARMA…YDRRYRIWET (106 aa). Residues 107–127 traverse the membrane as a helical segment; the sequence is FLIVLVVYSAWVSPFEFGFIP. At 128–136 the chain is on the extracellular side; that stretch reads KPTGALATA. The chain crosses the membrane as a helical span at residues 137 to 157; the sequence is DNVVNAFFAVDIILTFFVAYL. Topologically, residues 158 to 178 are cytoplasmic; that stretch reads DKMSYMLEDDPKKIAWRYSTT. The chain crosses the membrane as a helical span at residues 179-199; the sequence is WLVLDVASTIPSEFARRILPS. Topologically, residues 200–205 are extracellular; sequence KLRSYG. The helical; Voltage-sensor transmembrane segment at 206 to 226 threads the bilayer; that stretch reads FFNMLRLWRLRRVSSLFSRLE. Residues 227–240 lie on the Cytoplasmic side of the membrane; sequence KDRHFNYFWVRCAK. The helical transmembrane segment at 241 to 261 threads the bilayer; it reads LICVTLFAVHCAACFYYLLAD. Over 262 to 288 the chain is Extracellular; it reads RYPVPTSTWIGNYMADFHERSLWIRYV. An intramembrane region (pore-forming) is located at residues 289–308; it reads TSVYWSITTLTTVGYGDLHA. The Extracellular segment spans residues 309–312; that stretch reads ENTR. The helical transmembrane segment at 313-333 threads the bilayer; the sequence is EMIFNIFYMLFNLGLTAYLIG. Residues 334-935 are Cytoplasmic-facing; the sequence is NMTNLVVHGT…WDAEKMKGKS (602 aa). Residue 419–538 coordinates a nucleoside 3',5'-cyclic phosphate; that stretch reads LFQGVSNDLI…TIIMNNLIQF (120 aa). ANK repeat units follow at residues 565 to 594, 598 to 627, 631 to 660, 662 to 691, 695 to 724, and 728 to 757; these read DLPI…DPNE, DGHT…DPNA, EGKV…DLSS, DTGL…DVNR, DGTT…DIDK, and NGWT…ATAS. The interval 826 to 854 is disordered; the sequence is SQAQRETDHPLSRGGLAATGSPNPSSGSR. Residues 845–854 are compositionally biased toward polar residues; sequence GSPNPSSGSR. One can recognise a KHA domain in the interval 859–935; sequence RVTISCPEKG…WDAEKMKGKS (77 aa).

This sequence belongs to the potassium channel family. Plant (TC 1.A.1.4) subfamily. As to quaternary structure, the potassium channel is probably a homo- or heterotetrameric complex of pore-forming subunits. Expressed in roots and coleoptile of young seedlings.

The protein localises to the membrane. Highly selective inward-rectifying potassium channel that mediates potassium uptake by plant roots. Assuming opened or closed conformations in response to the voltage difference across the membrane, the channel is activated by hyperpolarization. May be a major salt-sensitive potassium channel in roots. This is Potassium channel AKT1 (AKT1) from Oryza sativa subsp. japonica (Rice).